Reading from the N-terminus, the 159-residue chain is Small ribosomal subunit protein uS19 (159 aa).

It belongs to the universal ribosomal protein uS19 family.

Protein S19 forms a complex with S13 that binds strongly to the 16S ribosomal RNA. The protein is Small ribosomal subunit protein uS19 of Pyrobaculum arsenaticum (strain DSM 13514 / JCM 11321 / PZ6).